A 388-amino-acid polypeptide reads, in one-letter code: Chalcone synthase LF3 (388 aa).

The active site involves cysteine 164.

The protein belongs to the thiolase-like superfamily. Chalcone/stilbene synthases family.

The enzyme catalyses (E)-4-coumaroyl-CoA + 3 malonyl-CoA + 3 H(+) = 2',4,4',6'-tetrahydroxychalcone + 3 CO2 + 4 CoA. The protein operates within secondary metabolite biosynthesis; flavonoid biosynthesis. Functionally, the primary product of this enzyme is 4,2',4',6'-tetrahydroxychalcone (also termed naringenin-chalcone or chalcone) which can under specific conditions spontaneously isomerize into naringenin. This Ipomoea batatas (Sweet potato) protein is Chalcone synthase LF3 (CHS-LF3).